A 460-amino-acid chain; its full sequence is DNA repair protein RadA (460 aa).

The segment at 11 to 28 adopts a C4-type zinc-finger fold; the sequence is CNECGADYPRWQGQCSAC. Residue 102–109 participates in ATP binding; that stretch reads GNPGAGKS. A RadA KNRFG motif motif is present at residues 258 to 262; the sequence is KNRFG. The tract at residues 357–460 is lon-protease-like; that stretch reads DVFVNVVGGV…ADALSVFDDL (104 aa).

This sequence belongs to the RecA family. RadA subfamily.

DNA-dependent ATPase involved in processing of recombination intermediates, plays a role in repairing DNA breaks. Stimulates the branch migration of RecA-mediated strand transfer reactions, allowing the 3' invading strand to extend heteroduplex DNA faster. Binds ssDNA in the presence of ADP but not other nucleotides, has ATPase activity that is stimulated by ssDNA and various branched DNA structures, but inhibited by SSB. Does not have RecA's homology-searching function. The polypeptide is DNA repair protein RadA (Salmonella typhimurium (strain LT2 / SGSC1412 / ATCC 700720)).